Consider the following 486-residue polypeptide: Glutamyl-tRNA(Gln) amidotransferase subunit A (486 aa).

Active-site charge relay system residues include Lys-76 and Ser-151. Ser-175 functions as the Acyl-ester intermediate in the catalytic mechanism.

This sequence belongs to the amidase family. GatA subfamily. Heterotrimer of A, B and C subunits.

It carries out the reaction L-glutamyl-tRNA(Gln) + L-glutamine + ATP + H2O = L-glutaminyl-tRNA(Gln) + L-glutamate + ADP + phosphate + H(+). Functionally, allows the formation of correctly charged Gln-tRNA(Gln) through the transamidation of misacylated Glu-tRNA(Gln) in organisms which lack glutaminyl-tRNA synthetase. The reaction takes place in the presence of glutamine and ATP through an activated gamma-phospho-Glu-tRNA(Gln). The sequence is that of Glutamyl-tRNA(Gln) amidotransferase subunit A from Marinomonas sp. (strain MWYL1).